Here is a 213-residue protein sequence, read N- to C-terminus: Uracil phosphoribosyltransferase (213 aa).

5-phospho-alpha-D-ribose 1-diphosphate contacts are provided by residues R78, R103, and 130-138 (DPMLATGGT). Uracil is bound by residues I197 and 202–204 (GDA). A 5-phospho-alpha-D-ribose 1-diphosphate-binding site is contributed by D203.

Belongs to the UPRTase family. Mg(2+) is required as a cofactor.

The catalysed reaction is UMP + diphosphate = 5-phospho-alpha-D-ribose 1-diphosphate + uracil. The protein operates within pyrimidine metabolism; UMP biosynthesis via salvage pathway; UMP from uracil: step 1/1. Its activity is regulated as follows. Allosterically activated by GTP. Functionally, catalyzes the conversion of uracil and 5-phospho-alpha-D-ribose 1-diphosphate (PRPP) to UMP and diphosphate. This chain is Uracil phosphoribosyltransferase, found in Nocardioides sp. (strain ATCC BAA-499 / JS614).